The primary structure comprises 2112 residues: Phenolphthiocerol synthesis polyketide synthase type I Pks15/1 (2112 aa).

The Ketosynthase family 3 (KS3) domain occupies 46–469 (TEPVAVVGIG…GTNAHLILEE (424 aa)). Active-site for beta-ketoacyl synthase activity residues include C216, H351, and H391. The tract at residues 579 to 893 (TVVVFPGQGA…GQVFTTGVPV (315 aa)) is acyltransferase. The For acyltransferase activity role is filled by S670. Residues 941-1063 (HALLGAVVER…GMLGVAAAET (123 aa)) form an N-terminal hotdog fold region. The segment at 941–1101 (HALLGAVVER…YAYGPAFQGL (161 aa)) is dehydratase. The 275-residue stretch at 941 to 1215 (HALLGAVVER…TRPITAEQLR (275 aa)) folds into the PKS/mFAS DH domain. H973 functions as the Proton acceptor; for dehydratase activity in the catalytic mechanism. The C-terminal hotdog fold stretch occupies residues 1075 to 1215 (AESVDISDGY…TRPITAEQLR (141 aa)). The active-site Proton donor; for dehydratase activity is the D1136. Residues 1406 to 1711 (GTLEDLVIQP…QARHIGKVVL (306 aa)) form an enoylreductase region. NADP(+)-binding positions include 1536–1553 (VLIHAGTGGVGMAAVQLA) and 1725–1740 (TVVITGATGAVGGVLA). The segment at 1724–1905 (GTVVITGATG…SLAWGLWEQP (182 aa)) is beta-ketoacyl reductase. The Carrier domain maps to 2010–2085 (ELLVGLVCLQ…AVAEYVAQQM (76 aa)). S2045 carries the O-(pantetheine 4'-phosphoryl)serine modification. Residues 2084–2100 (QMSGSRPTESGDPTSQV) are compositionally biased toward polar residues. Residues 2084-2112 (QMSGSRPTESGDPTSQVVEPAAAEVSVHA) are disordered.

This sequence belongs to the thiolase-like superfamily. Beta-ketoacyl-ACP synthases family. Pantetheine 4'-phosphate serves as cofactor.

The catalysed reaction is a fatty acyl-[ACP] + malonyl-[ACP] + H(+) = a 3-oxoacyl-[ACP] + holo-[ACP] + CO2. It participates in lipid metabolism; fatty acid biosynthesis. Its function is as follows. Catalyzes the elongation by iterative transfer of p-hydroxybenzoyl group from FadD22 (pHBA-S-FAdD22) to form p-hydroxyphenylalkanoate (pHPA) intermediates during phenolphthiocerol (PPOL) biosynthesis. PPOL is an important intermediate in the biosynthesis of phenolic glycolipid (mycosid B). In Mycobacterium bovis (strain ATCC BAA-935 / AF2122/97), this protein is Phenolphthiocerol synthesis polyketide synthase type I Pks15/1 (pks15/1).